A 145-amino-acid polypeptide reads, in one-letter code: D-aminoacyl-tRNA deacylase (145 aa).

The Gly-cisPro motif, important for rejection of L-amino acids signature appears at 137–138; sequence GP.

The protein belongs to the DTD family. Homodimer.

It localises to the cytoplasm. It carries out the reaction glycyl-tRNA(Ala) + H2O = tRNA(Ala) + glycine + H(+). It catalyses the reaction a D-aminoacyl-tRNA + H2O = a tRNA + a D-alpha-amino acid + H(+). Functionally, an aminoacyl-tRNA editing enzyme that deacylates mischarged D-aminoacyl-tRNAs. Also deacylates mischarged glycyl-tRNA(Ala), protecting cells against glycine mischarging by AlaRS. Acts via tRNA-based rather than protein-based catalysis; rejects L-amino acids rather than detecting D-amino acids in the active site. By recycling D-aminoacyl-tRNA to D-amino acids and free tRNA molecules, this enzyme counteracts the toxicity associated with the formation of D-aminoacyl-tRNA entities in vivo and helps enforce protein L-homochirality. This chain is D-aminoacyl-tRNA deacylase, found in Pseudomonas entomophila (strain L48).